We begin with the raw amino-acid sequence, 75 residues long: uncharacterized protein (75 aa).

The signal sequence occupies residues 1–18; that stretch reads MRKYLSARSMCCSFFSCA.

This is an uncharacterized protein from Treponema pallidum (strain Nichols).